The sequence spans 369 residues: MSNLLRTPLFDLIVQQKAKLTEFSGWEMPVQFSKLKDEHQAVRTDVGMFDISHMGKFALQGTELLKSLQFLVPSDLERLQPGQAQYTVLLNPQGGIIDDIIVYYQGITETGEQRANIIVNAGTTEKDKTWLLSHLDTQKITFKDLSGEKVLIAVQGPQSVAKLQAFVQEDLSQVGFFGHFEGTVLTKPAFIARTGYTGEDGFEVMVDPEVGQDLWRSLFQAGVTPCGLGARDTLRLEAAMCLYSQDIDDNTTPLEAGLNWLVHLDSKGDFIGRDILEKQKAQGVERRLVGLQMEGRHIARHGYPVLYEGKIVGEVTSGTLPPTVGKAIALAYVPRSLGKVGTPLEVEIRGQNCQAIVVKKPFYRSPNRF.

It belongs to the GcvT family. The glycine cleavage system is composed of four proteins: P, T, L and H.

It carries out the reaction N(6)-[(R)-S(8)-aminomethyldihydrolipoyl]-L-lysyl-[protein] + (6S)-5,6,7,8-tetrahydrofolate = N(6)-[(R)-dihydrolipoyl]-L-lysyl-[protein] + (6R)-5,10-methylene-5,6,7,8-tetrahydrofolate + NH4(+). Its function is as follows. The glycine cleavage system catalyzes the degradation of glycine. The protein is Aminomethyltransferase of Rippkaea orientalis (strain PCC 8801 / RF-1) (Cyanothece sp. (strain PCC 8801)).